Consider the following 1098-residue polypeptide: Paired amphipathic helix protein Sin3b (1098 aa).

The segment covering 1–25 has biased composition (gly residues); it reads MAHAGSGGSAGRGFGGSRWGRSGSG. The segment at 1-26 is disordered; that stretch reads MAHAGSGGSAGRGFGGSRWGRSGSGG. Positions 1–299 are interaction with CRY1; sequence MAHAGSGGSA…VGKYGTLQEF (299 aa). PAH domains follow at residues 30-100 and 145-230; these read LPVH…LPLG and VPLE…LPEA. An interaction with REST region spans residues 52-98; that stretch reads PATYNGFLEIMKEFKSQSIDTPGVIRRVSQLFHEHPDLIVGFNAFLP. Residues 238–247 are compositionally biased toward polar residues; it reads NGSCEMNSGQ. The segment at 238–274 is disordered; the sequence is NGSCEMNSGQKNEEKSLEHNKKRSRPSLLRPVSAPAK. Residues 275–499 form an interaction with NCOR1 region; sequence KKMKLRGTKD…CLGGTSEVIQ (225 aa). The PAH 3 domain maps to 283-360; it reads KDLSIAAVGK…AQFKSFLGVK (78 aa). The tract at residues 383 to 550 is interaction with SUDS3 and HDAC1; it reads ASCKRIGSSY…REAQQGFNKI (168 aa). The segment at 661-702 is disordered; the sequence is QQCPGTSDDSADERDRDRDSAEPERRRPTDEKPPADASPEPP. Residues serine 667 and serine 670 each carry the phosphoserine modification. Positions 673–694 are enriched in basic and acidic residues; sequence ERDRDRDSAEPERRRPTDEKPP.

Component of the SIN3B complex, which includes SIN3B, HDAC2 or HDAC1, PHF12 and MORF4L1. Interacts with FOXK1/MNF, MXI, MAD, NCOR1 and SAP30. Interaction with SUDS3 enhances the interaction with HDAC1 to form a complex. Interacts with CRY1, HCFC1, MAD3, MAD4, MAEL, REST, RNF220 and SETDB1. Interacts with C6orf89. Interacts with MYT1L. Post-translationally, ubiquitinated by RNF220 that leads to proteasomal degradation.

The protein resides in the nucleus. In terms of biological role, acts as a transcriptional repressor. Interacts with MXI1 to repress MYC responsive genes and antagonize MYC oncogenic activities. Interacts with MAD-MAX heterodimers by binding to MAD. The heterodimer then represses transcription by tethering SIN3B to DNA. Also forms a complex with FOXK1 which represses transcription. With FOXK1, regulates cell cycle progression probably by repressing cell cycle inhibitor genes expression. As part of the SIN3B complex represses transcription and counteracts the histone acetyltransferase activity of EP300 through the recognition H3K27ac marks by PHF12 and the activity of the histone deacetylase HDAC2. SIN3B complex is recruited downstream of the constitutively active genes transcriptional start sites through interaction with histones and mitigates histone acetylation and RNA polymerase II progression within transcribed regions contributing to the regulation of transcription. This Mus musculus (Mouse) protein is Paired amphipathic helix protein Sin3b (Sin3b).